We begin with the raw amino-acid sequence, 115 residues long: Large ribosomal subunit protein bL19 (115 aa).

The protein belongs to the bacterial ribosomal protein bL19 family.

In terms of biological role, this protein is located at the 30S-50S ribosomal subunit interface and may play a role in the structure and function of the aminoacyl-tRNA binding site. The sequence is that of Large ribosomal subunit protein bL19 from Shouchella clausii (strain KSM-K16) (Alkalihalobacillus clausii).